The primary structure comprises 388 residues: STE20-related kinase adapter protein strd-1 (388 aa).

Positions 52-335 (YDCVRYMGTC…ASDLKSSAWL (284 aa)) constitute a Protein kinase domain. ATP contacts are provided by residues 58 to 66 (MGTCNGGQI) and Lys82.

It belongs to the protein kinase superfamily. STE Ser/Thr protein kinase family. STE20 subfamily. In terms of assembly, interacts with sad-1. Interacts with par-4. In terms of tissue distribution, expressed in nervous system, pharynx and excretory canal. Expressed in germline.

The protein localises to the perikaryon. It is found in the nucleus. Its subcellular location is the cell projection. It localises to the dendrite. The protein resides in the axon. The protein localises to the synapse. It is found in the cytoplasm. Its subcellular location is the cell cortex. Functionally, pseudokinase which may act as an adapter for kinases sad-1 and par-4 and thereby is involved in several developmental processes. Regulates cell-autonomously both neuronal polarity and synaptic organization when bound to sad-1. Required for sad-1 localization to synapses. Required to establish germline stem cell (GSC) quiescence during dauer development, to promote cell shedding during embryogenesis and to control asymmetric cell division of the Q.p neuroblast lineage, probably when bound to par-4. May be involved in maintaining the integrity of the early embryonic cortex when bound to par-4. The polypeptide is STE20-related kinase adapter protein strd-1 (Caenorhabditis elegans).